We begin with the raw amino-acid sequence, 930 residues long: Protein ARABIDILLO 1 (930 aa).

The Nuclear localization signal signature appears at 3-8 (RRVRRK). Residues 44-90 (FVDWISLPYDTVLQLFTCLNYRDRASLASTCKTWRCLGASSCLWTSL) enclose the F-box domain. ARM repeat units lie at residues 172–212 (RITS…KHCP), 244–285 (TSNI…TSSQ), 379–418 (PEGL…TFVV), 428–467 (CGRA…NLSV), 469–508 (ANIA…NLSV), 510–552 (EEHK…NLAA), 554–594 (DKCS…NLAA), 600–639 (NNNA…NLSF), 641–683 (DKNR…GLSV), 685–724 (EANS…NLAF), 726–766 (PGNA…YMFD), 790–831 (LDGA…QVTE), and 835–875 (IQEA…QFTI).

It belongs to the beta-catenin family. As to quaternary structure, interacts with SNL1. Interacts with MYB53, MYB92 and MYB93. Expressed ubiquitously, with higher levels in root tip, pericycle and vasculature.

It localises to the nucleus. Promotes lateral root initiation and development, independently of auxin (IAA) and abscisis acid (ABA). The chain is Protein ARABIDILLO 1 (FBX5) from Arabidopsis thaliana (Mouse-ear cress).